The chain runs to 121 residues: Large ribosomal subunit protein uL14 (121 aa).

It belongs to the universal ribosomal protein uL14 family. In terms of assembly, part of the 50S ribosomal subunit. Forms a cluster with proteins L3 and L19. In the 70S ribosome, L14 and L19 interact and together make contacts with the 16S rRNA in bridges B5 and B8.

In terms of biological role, binds to 23S rRNA. Forms part of two intersubunit bridges in the 70S ribosome. The sequence is that of Large ribosomal subunit protein uL14 from Legionella pneumophila (strain Paris).